A 371-amino-acid polypeptide reads, in one-letter code: Opine oxidase subunit B (371 aa).

In terms of assembly, heterodimer of a subunit A and a subunit B.

Its pathway is opine metabolism; octopine degradation. Functionally, oxidative cleavage of octopine into L-arginine and pyruvate. In Rhizobium meliloti (Ensifer meliloti), this protein is Opine oxidase subunit B (ooxB).